A 238-amino-acid polypeptide reads, in one-letter code: Sugar fermentation stimulation protein homolog (238 aa).

Belongs to the SfsA family.

The sequence is that of Sugar fermentation stimulation protein homolog from Brucella abortus (strain S19).